We begin with the raw amino-acid sequence, 988 residues long: Exportin-T (988 aa).

The protein belongs to the exportin family.

It localises to the nucleus. It is found in the cytoplasm. Its function is as follows. tRNA nucleus export receptor which facilitates tRNA translocation across the nuclear pore complex. Involved in pre-tRNA splicing, probably by affecting the interaction of pre-tRNA with splicing endonuclease. The polypeptide is Exportin-T (LOS1) (Lodderomyces elongisporus (strain ATCC 11503 / CBS 2605 / JCM 1781 / NBRC 1676 / NRRL YB-4239) (Yeast)).